Reading from the N-terminus, the 87-residue chain is CRISPR-associated endoribonuclease Cas2 (87 aa).

Residue D8 coordinates Mg(2+).

This sequence belongs to the CRISPR-associated endoribonuclease Cas2 protein family. Homodimer, forms a heterotetramer with a Cas1 homodimer. It depends on Mg(2+) as a cofactor.

Its function is as follows. CRISPR (clustered regularly interspaced short palindromic repeat), is an adaptive immune system that provides protection against mobile genetic elements (viruses, transposable elements and conjugative plasmids). CRISPR clusters contain sequences complementary to antecedent mobile elements and target invading nucleic acids. CRISPR clusters are transcribed and processed into CRISPR RNA (crRNA). Functions as a ssRNA-specific endoribonuclease. Involved in the integration of spacer DNA into the CRISPR cassette. The protein is CRISPR-associated endoribonuclease Cas2 of Frankia alni (strain DSM 45986 / CECT 9034 / ACN14a).